The chain runs to 703 residues: WPP domain-interacting tail-anchored protein 1 (703 aa).

Basic and acidic residues predominate over residues 1–12 (METETEHDRTVS). Disordered regions lie at residues 1-27 (METETEHDRTVSVDDNDSLVPEPSSTK) and 86-107 (FVSKKEEDEEEPSSNVDDDDDS). Positions 92-107 (EDEEEPSSNVDDDDDS) are enriched in acidic residues. Residues 118–183 (SSILNSEVKE…MEQVVEMKKQ (66 aa)) are a coiled coil. The interval 189–208 (RLSSGLDEQGSWSGGQTSVS) is disordered. The segment covering 198–208 (GSWSGGQTSVS) has biased composition (polar residues). Coiled coils occupy residues 236–265 (LEKSLAKEMELEKKLSESRNTERELEMKLY), 318–461 (KRED…RDKG), and 500–604 (STVS…SREN). A helical membrane pass occupies residues 679–699 (FKHILVAILVILISSIAYVIS).

Homodimer. Component of Ran complexes at least composed of WIT1 or WIT2, RANGAP1 or RANGAP2, and WIP1 or WIP2 or WIP3. Interacts with WIP2, WPP1/MAF1, WPP2/MAF2, RANGAP1 and RANGAP2. Component of a ternary complex composed of WPP1, HSP70-1 and WIT1. Interacts with KAKU1. Interacts with WIP1. As to expression, ubiquitous.

Its subcellular location is the nucleus envelope. It is found in the nucleus membrane. Together with WIT2, required for the nuclear envelope docking of RANGAP proteins in root tips. This Arabidopsis thaliana (Mouse-ear cress) protein is WPP domain-interacting tail-anchored protein 1 (WIT1).